Here is a 770-residue protein sequence, read N- to C-terminus: PH and SEC7 domain-containing protein 2 (770 aa).

Residues 1-24 (MDEEKLPCELHKEGSATQEDHGLE) show a composition bias toward basic and acidic residues. 2 disordered regions span residues 1–65 (MDEE…RGPD) and 181–304 (IQQR…ANGC). Residues 32 to 45 (QNGTAASEGLSSHI) are compositionally biased toward polar residues. A Phosphoserine modification is found at Ser188. Low complexity-rich tracts occupy residues 216–234 (LGSP…NVLS) and 285–296 (ELSSSEGLEPGS). Residues 256 to 459 (DDEDDEDTDK…KTLYNSIKNE (204 aa)) form the SEC7 domain. A PH domain is found at 509-622 (TTYKHGVLTR…WILRINLVAA (114 aa)). A helical transmembrane segment spans residues 619–636 (LVAAIFSAPAFPAAVSSM). Positions 650 to 677 (RLCQEEQLRSHENKLRQVTAELAEHRCH) form a coiled coil. The segment at 738 to 770 (PALRKTHSSPALSLGHGPVTGSKATKDTSASDT) is disordered.

This sequence belongs to the PSD family.

It is found in the cell membrane. Its subcellular location is the cell projection. The protein localises to the ruffle membrane. The protein resides in the cleavage furrow. This is PH and SEC7 domain-containing protein 2 (Psd2) from Mus musculus (Mouse).